The chain runs to 407 residues: MRILYFDCFAGASGDMILGALLDLGIDVGIFKRELAGLNLDGFDIAVEKKVINSIAVTDVNVIVKEECNHHTGHHHHCERNLADIEKIIDESSLKDNVKRLSKKIFSEIARAEAKVHNKSIEDVHFHEVGAIDSIVDIVGTAICLDLLKVDKIYSSPMHDGTGFIECQHGKLPVPVPAVLEMLKESNIPYITEDVNTELLTPTGLGIIKCVASKFGPMPPMTIEKVGYGAGKRQTGRFNALRCILGNAKEKEKIDDEICMLETNIDDMNPEILGYVMNRLFENGALDVFYTPVYMKKNRPGVLLTVLTDKEHEEKLVDIILTETTTLGIRKTTAQRYVLEREIKHVNTEFGKIRVKESSFGDYKKYSPEFEDCKKVAQELKIPLSKVYDAVNKAILVFEERNENALQ.

This sequence belongs to the LarC family.

The catalysed reaction is Ni(II)-pyridinium-3,5-bisthiocarboxylate mononucleotide = pyridinium-3,5-bisthiocarboxylate mononucleotide + Ni(2+). Its function is as follows. Involved in the biosynthesis of a nickel-pincer cofactor ((SCS)Ni(II) pincer complex). Binds Ni(2+), and functions in nickel delivery to pyridinium-3,5-bisthiocarboxylic acid mononucleotide (P2TMN), to form the mature cofactor. Is thus probably required for the activation of nickel-pincer cofactor-dependent enzymes. In Acetivibrio thermocellus (strain ATCC 27405 / DSM 1237 / JCM 9322 / NBRC 103400 / NCIMB 10682 / NRRL B-4536 / VPI 7372) (Clostridium thermocellum), this protein is Pyridinium-3,5-bisthiocarboxylic acid mononucleotide nickel insertion protein.